A 264-amino-acid polypeptide reads, in one-letter code: Glutamate racemase (264 aa).

Substrate-binding positions include 10–11 (DS) and 42–43 (YG). Cys-73 (proton donor/acceptor) is an active-site residue. 74–75 (NT) lines the substrate pocket. Catalysis depends on Cys-183, which acts as the Proton donor/acceptor. 184-185 (TH) is a substrate binding site.

It belongs to the aspartate/glutamate racemases family.

The enzyme catalyses L-glutamate = D-glutamate. It participates in cell wall biogenesis; peptidoglycan biosynthesis. Its function is as follows. Provides the (R)-glutamate required for cell wall biosynthesis. The chain is Glutamate racemase from Streptococcus pyogenes serotype M6 (strain ATCC BAA-946 / MGAS10394).